The chain runs to 200 residues: dITP/XTP pyrophosphatase (200 aa).

5–10 (TRNEGK) contacts substrate. Catalysis depends on aspartate 67, which acts as the Proton acceptor. Aspartate 67 contacts Mg(2+). Substrate is bound by residues serine 68, 151–154 (FGYD), lysine 174, and 179–180 (HR).

The protein belongs to the HAM1 NTPase family. In terms of assembly, homodimer. Mg(2+) serves as cofactor.

The catalysed reaction is XTP + H2O = XMP + diphosphate + H(+). The enzyme catalyses dITP + H2O = dIMP + diphosphate + H(+). It carries out the reaction ITP + H2O = IMP + diphosphate + H(+). Pyrophosphatase that catalyzes the hydrolysis of nucleoside triphosphates to their monophosphate derivatives, with a high preference for the non-canonical purine nucleotides XTP (xanthosine triphosphate), dITP (deoxyinosine triphosphate) and ITP. Seems to function as a house-cleaning enzyme that removes non-canonical purine nucleotides from the nucleotide pool, thus preventing their incorporation into DNA/RNA and avoiding chromosomal lesions. This is dITP/XTP pyrophosphatase from Streptococcus pneumoniae serotype 4 (strain ATCC BAA-334 / TIGR4).